Consider the following 644-residue polypeptide: uncharacterized protein (644 aa).

The interval 123–644 (VSQQIQHDQH…AVGKKKPTKK (522 aa)) is disordered. Low complexity predominate over residues 133-155 (PQYNKHPQNNHHPQNTQHSQNNP). The span at 159–174 (NINESENKEDLSDRSS) shows a compositional bias: basic and acidic residues. A compositionally biased stretch (polar residues) spans 175 to 191 (DSANSEESHNSQYSQDS). The segment covering 192-204 (GDSRNYQDSEDNK) has biased composition (basic and acidic residues). Polar residues predominate over residues 216-233 (NKLIVQRLTNPKITPDTI). Basic and acidic residues-rich tracts occupy residues 236 to 249 (SNKD…KDLS) and 256 to 279 (SIKD…KSKE). 2 stretches are compositionally biased toward acidic residues: residues 292-301 (DGDDLDDLGN) and 310-338 (SDYE…DDSN). The span at 367–400 (KSPSNSKKSKTNQKLSQSSKKISSKTITNSGSKS) shows a compositional bias: low complexity. The segment covering 447 to 476 (SDDSDNESDNESDNESNNDSDNETDSEIDD) has biased composition (acidic residues). Positions 496-531 (PKTPMKPNNKTTSVSKPVSKPPVKSSIKNNTKNNKP) are enriched in low complexity. Positions 544–558 (KQKDQSESQSDKDID) are enriched in basic and acidic residues. Over residues 585–594 (PPKSVSLPSS) the composition is skewed to low complexity. Residues 607 to 630 (TAKTQNKSKSQPKTNGSKTSTKSI) are compositionally biased toward polar residues.

This is an uncharacterized protein from Acanthamoeba polyphaga mimivirus (APMV).